The sequence spans 1313 residues: Histone-lysine N-methyltransferase, H3 lysine-4 specific (1313 aa).

Disordered stretches follow at residues 1 to 205 (MSRS…DPSR), 400 to 458 (KKSR…KPRH), 555 to 607 (GKSS…AKNL), 667 to 792 (IVFD…AGED), 842 to 908 (ELPS…SKKQ), and 932 to 982 (AGIE…DPEL). Low complexity predominate over residues 7–18 (ASFAQFFPAAPR). Residues 19–31 (AARDRATERERAR) are compositionally biased toward basic and acidic residues. Positions 70–80 (HITSLNHSSSA) are enriched in polar residues. Residues 105–121 (SASSHTSTSSSIFSSST) are compositionally biased toward low complexity. Polar residues-rich tracts occupy residues 130-158 (SVRN…STSL) and 174-186 (NGLT…SATD). Residues 194 to 204 (GTERVPPRDPS) show a composition bias toward basic and acidic residues. Positions 559–607 (RSSEDHRRHSYGSEKRPPPEHRQRDDQDRRRRDEEADIEEEKKQRAKNL) are enriched in basic and acidic residues. Over residues 702 to 716 (RVRKLKSRGVNARKH) the composition is skewed to basic residues. The span at 758–784 (MIRDTEEPESRPRSRVSSEEDRNKEET) shows a compositional bias: basic and acidic residues. The segment covering 843–855 (LPSQEQAVESVTP) has biased composition (polar residues). A compositionally biased stretch (basic and acidic residues) spans 868–884 (ADVKAEPAEDKETEDSR). A compositionally biased stretch (basic residues) spans 895–907 (PKKKAKAKKKSKK). Over residues 960 to 978 (LETKGEALEAPETESKPDL) the composition is skewed to basic and acidic residues. A RxxxRR motif motif is present at residues 1137-1142 (RVNNRR). The SET domain occupies 1171 to 1288 (KPVKFARSAI…QNEELTYDYK (118 aa)). Residue Y1287 participates in S-adenosyl-L-methionine binding. Positions 1297 to 1313 (DRIPCLCGTAACKGFLN) constitute a Post-SET domain.

It belongs to the class V-like SAM-binding methyltransferase superfamily. Component of the Set1C/COMPASS complex.

The protein resides in the nucleus. It localises to the chromosome. The catalysed reaction is L-lysyl(4)-[histone H3] + 3 S-adenosyl-L-methionine = N(6),N(6),N(6)-trimethyl-L-lysyl(4)-[histone H3] + 3 S-adenosyl-L-homocysteine + 3 H(+). The enzyme catalyses N(6)-methyl-L-lysyl(4)-[histone H3] + S-adenosyl-L-methionine = N(6),N(6)-dimethyl-L-lysyl(4)-[histone H3] + S-adenosyl-L-homocysteine + H(+). It carries out the reaction N(6),N(6)-dimethyl-L-lysyl(4)-[histone H3] + S-adenosyl-L-methionine = N(6),N(6),N(6)-trimethyl-L-lysyl(4)-[histone H3] + S-adenosyl-L-homocysteine + H(+). Catalytic component of the COMPASS (Set1C) complex that specifically mono-, di- and trimethylates histone H3 to form H3K4me1/2/3. Binds RNAs which might negatively affect its histone methyltransferase activity. COMPASS recognizes ubiquitinated H2B on one face of the nucleosome which stimulates the methylation of H3 on the opposing face. This is Histone-lysine N-methyltransferase, H3 lysine-4 specific (set-1) from Neurospora crassa (strain ATCC 24698 / 74-OR23-1A / CBS 708.71 / DSM 1257 / FGSC 987).